We begin with the raw amino-acid sequence, 203 residues long: Pro-FMRFamide-related neuropeptide VF (203 aa).

A signal peptide spans 1–26 (MEIISSKRFILLTLATSSFLTSNTLC). A propeptide spanning residues 27–57 (SDELMMPHFHSKEGYGKYYQLRGIPKGVKER) is cleaved from the precursor. Phe-94 carries the post-translational modification Phenylalanine amide. The propeptide occupies 97-106 (NIEDRRSPRA). At Phe-125 the chain carries Phenylalanine amide. Positions 128-203 (TTARRITKTL…QPVLQGAMKL (76 aa)) are excised as a propeptide. The disordered stretch occupies residues 161–186 (HQEIQSPGQEQPRKRVFTETDDAERK). Residues 171–186 (QPRKRVFTETDDAERK) are compositionally biased toward basic and acidic residues.

It belongs to the FARP (FMRFamide related peptide) family. In terms of tissue distribution, isoform 1 is expressed at high levels in the hypothalamus and eye. Isoform 2 is specifically expressed in a region between the dorsomedial hypothalamic and ventromedial hypothalamic nuclei.

The protein resides in the secreted. Functionally, efficiently inhibits forskolin-induced production of cAMP. Acts as a potent negative regulator of gonadotropin synthesis and secretion. Induces secretion of prolactin. In terms of biological role, efficiently inhibits forskolin-induced production of cAMP. Blocks morphine-induced analgesia. The protein is Pro-FMRFamide-related neuropeptide VF (Npvf) of Rattus norvegicus (Rat).